The chain runs to 388 residues: Chaperone protein DnaJ (388 aa).

One can recognise a J domain in the interval 5 to 69 (DYYDVLGVDK…QKRAQYDQFG (65 aa)). A CR-type zinc finger spans residues 145 to 227 (GKKTDITYTR…CHGQGTVDKK (83 aa)). Zn(2+)-binding residues include C158, C161, C175, C178, C201, C204, C215, and C218. 4 CXXCXGXG motif repeats span residues 158–165 (CPTCDGSG), 175–182 (CDKCHGSG), 201–208 (CDKCGGRG), and 215–222 (CQTCHGQG).

This sequence belongs to the DnaJ family. As to quaternary structure, homodimer. Zn(2+) is required as a cofactor.

The protein localises to the cytoplasm. Functionally, participates actively in the response to hyperosmotic and heat shock by preventing the aggregation of stress-denatured proteins and by disaggregating proteins, also in an autonomous, DnaK-independent fashion. Unfolded proteins bind initially to DnaJ; upon interaction with the DnaJ-bound protein, DnaK hydrolyzes its bound ATP, resulting in the formation of a stable complex. GrpE releases ADP from DnaK; ATP binding to DnaK triggers the release of the substrate protein, thus completing the reaction cycle. Several rounds of ATP-dependent interactions between DnaJ, DnaK and GrpE are required for fully efficient folding. Also involved, together with DnaK and GrpE, in the DNA replication of plasmids through activation of initiation proteins. The protein is Chaperone protein DnaJ of Lactobacillus johnsonii (strain CNCM I-12250 / La1 / NCC 533).